A 417-amino-acid polypeptide reads, in one-letter code: GTP-binding protein YPT11 (417 aa).

The interval 1 to 34 is disordered; the sequence is MSQRKRYSLNVVTSPSIPSPTPSAPIRTNESNWE. Residues 97–104, 228–232, and 292–295 contribute to the GTP site; these read GDANVGKT, DTAGQ, and NKID. 2 S-geranylgeranyl cysteine lipidation sites follow: Cys415 and Cys416.

It belongs to the small GTPase superfamily. Rab family. Interacts with MYO2 (via C-terminal tail domain). Interacts with YIF1, YIP3, YIP4 and YIP5.

Its subcellular location is the endoplasmic reticulum membrane. It localises to the bud tip. The protein resides in the bud neck. Its function is as follows. Involved in the positive control of both endoplasmic reticulum (ER) and mitochondrion inheritance during cell divison. Required for the MYO2-dependent retention of newly inherited mitochondria at the bud tip in developing daughter cells. The sequence is that of GTP-binding protein YPT11 (YPT11) from Saccharomyces cerevisiae (strain RM11-1a) (Baker's yeast).